Here is a 150-residue protein sequence, read N- to C-terminus: SsrA-binding protein (150 aa).

It belongs to the SmpB family.

The protein localises to the cytoplasm. Functionally, required for rescue of stalled ribosomes mediated by trans-translation. Binds to transfer-messenger RNA (tmRNA), required for stable association of tmRNA with ribosomes. tmRNA and SmpB together mimic tRNA shape, replacing the anticodon stem-loop with SmpB. tmRNA is encoded by the ssrA gene; the 2 termini fold to resemble tRNA(Ala) and it encodes a 'tag peptide', a short internal open reading frame. During trans-translation Ala-aminoacylated tmRNA acts like a tRNA, entering the A-site of stalled ribosomes, displacing the stalled mRNA. The ribosome then switches to translate the ORF on the tmRNA; the nascent peptide is terminated with the 'tag peptide' encoded by the tmRNA and targeted for degradation. The ribosome is freed to recommence translation, which seems to be the essential function of trans-translation. The polypeptide is SsrA-binding protein (Magnetococcus marinus (strain ATCC BAA-1437 / JCM 17883 / MC-1)).